Here is a 216-residue protein sequence, read N- to C-terminus: N-acetyltransferase 9-like protein (216 aa).

Residues 68–215 (VLLNENDEAK…DHVELELMRT (148 aa)) form the N-acetyltransferase domain.

This sequence belongs to the acetyltransferase family. GNAT subfamily.

Its subcellular location is the cytoplasm. The protein localises to the nucleus. This Schizosaccharomyces pombe (strain 972 / ATCC 24843) (Fission yeast) protein is N-acetyltransferase 9-like protein.